A 417-amino-acid polypeptide reads, in one-letter code: Dibenzothiophene monooxygenase (417 aa).

Positions 19–125 (DPVAVARGLA…LYTQIAQNNW (107 aa)) are helical N-terminus. FMN-binding positions include Tyr-96, 129–134 (NASSEN), 159–163 (KHFCS), Arg-282, 369–370 (AR), and His-391. The interval 126–234 (WTGNASSENN…VEPDEVLGAP (109 aa)) is central beta-barrel N-terminus. Positions 131 to 142 (SSENNSHELDVK) are lid loop. The segment at 235-409 (NAFVLAFIQS…DVGKHTLNGQ (175 aa)) is helical C-terminus.

It belongs to the DszC flavin monooxygenase family. As to quaternary structure, homotetramer.

The protein localises to the cytoplasm. It catalyses the reaction dibenzothiophene + 2 FMNH2 + 2 O2 = dibenzothiophene 5,5-dioxide + 2 FMN + 2 H2O + 2 H(+). The catalysed reaction is dibenzothiophene + FMNH2 + O2 = dibenzothiophene 5-oxide + FMN + H2O + H(+). It carries out the reaction dibenzothiophene 5-oxide + FMNH2 + O2 = dibenzothiophene 5,5-dioxide + FMN + H2O + H(+). The protein operates within sulfur metabolism; dibenzothiophene degradation. Catalyzes the first step of the '4S' desulfurization pathway that removes covalently bound sulfur from dibenzothiophene (DBT) without breaking carbon-carbon bonds. Sulfur dioxygenase which converts DBT to DBT-sulfone (DBTO2 or DBT 5,5-dioxide) in a stepwise manner. In Rhodococcus erythropolis (Arthrobacter picolinophilus), this protein is Dibenzothiophene monooxygenase.